Reading from the N-terminus, the 668-residue chain is DNA ligase (668 aa).

NAD(+) is bound by residues 37–41 (DNVYD), 86–87 (SM), and Glu-116. Lys-118 functions as the N6-AMP-lysine intermediate in the catalytic mechanism. The NAD(+) site is built by Arg-139, Glu-173, Lys-288, and Lys-312. Cys-406, Cys-409, Cys-424, and Cys-429 together coordinate Zn(2+). Residues 591 to 668 (APDNPFKDKT…TEEEAIAQIE (78 aa)) enclose the BRCT domain.

It belongs to the NAD-dependent DNA ligase family. LigA subfamily. Mg(2+) is required as a cofactor. Mn(2+) serves as cofactor.

The catalysed reaction is NAD(+) + (deoxyribonucleotide)n-3'-hydroxyl + 5'-phospho-(deoxyribonucleotide)m = (deoxyribonucleotide)n+m + AMP + beta-nicotinamide D-nucleotide.. DNA ligase that catalyzes the formation of phosphodiester linkages between 5'-phosphoryl and 3'-hydroxyl groups in double-stranded DNA using NAD as a coenzyme and as the energy source for the reaction. It is essential for DNA replication and repair of damaged DNA. The chain is DNA ligase from Lactobacillus helveticus (strain DPC 4571).